The primary structure comprises 89 residues: Small ribosomal subunit protein uS15 (89 aa).

The protein belongs to the universal ribosomal protein uS15 family. Part of the 30S ribosomal subunit. Forms a bridge to the 50S subunit in the 70S ribosome, contacting the 23S rRNA.

One of the primary rRNA binding proteins, it binds directly to 16S rRNA where it helps nucleate assembly of the platform of the 30S subunit by binding and bridging several RNA helices of the 16S rRNA. In terms of biological role, forms an intersubunit bridge (bridge B4) with the 23S rRNA of the 50S subunit in the ribosome. In Bradyrhizobium sp. (strain ORS 278), this protein is Small ribosomal subunit protein uS15.